The primary structure comprises 149 residues: Probable flagellum biosynthesis repressor protein FlbT (149 aa).

It belongs to the FlbT family.

Its function is as follows. Has a post-transcriptional repressor function in flagellum biogenesis. Associates with the 5'-UTR of fljK mRNA and promotes its degradation. The protein is Probable flagellum biosynthesis repressor protein FlbT of Rhizobium johnstonii (strain DSM 114642 / LMG 32736 / 3841) (Rhizobium leguminosarum bv. viciae).